Here is an 877-residue protein sequence, read N- to C-terminus: GPI ethanolamine phosphate transferase 2 (877 aa).

Residues Asn-190 and Asn-368 are each glycosylated (N-linked (GlcNAc...) asparagine). The next 5 helical transmembrane spans lie at 409–429 (VDIY…FGLF), 443–463 (YNWY…ASSL), 464–484 (IEEE…ALYF), 528–548 (VDLL…LIYS), and 570–590 (DFGS…SFSF). A glycan (N-linked (GlcNAc...) asparagine) is linked at Asn-611. 6 helical membrane-spanning segments follow: residues 634–654 (IHLS…RIVL), 683–703 (EIVP…KLLA), 716–736 (LMII…FSMG), 758–778 (VFLV…FWSL), 817–837 (LAGF…CFNL), and 854–876 (FASW…ILAL).

Belongs to the PIGG/PIGN/PIGO family. PIGG subfamily.

The protein resides in the endoplasmic reticulum membrane. Its pathway is glycolipid biosynthesis; glycosylphosphatidylinositol-anchor biosynthesis. Ethanolamine phosphate transferase involved in glycosylphosphatidylinositol-anchor biosynthesis. Transfers ethanolamine phosphate to the GPI second mannose. This is GPI ethanolamine phosphate transferase 2 (LAS21) from Debaryomyces hansenii (strain ATCC 36239 / CBS 767 / BCRC 21394 / JCM 1990 / NBRC 0083 / IGC 2968) (Yeast).